The chain runs to 224 residues: Adenosylcobinamide-GDP ribazoletransferase (224 aa).

4 helical membrane passes run 21–41 (LSFK…AAIP), 44–64 (LLYL…ATGL), 97–117 (GGIF…HSPL), and 156–176 (WPAA…TTAV).

It belongs to the CobS family. Mg(2+) serves as cofactor.

Its subcellular location is the cell membrane. It catalyses the reaction alpha-ribazole + adenosylcob(III)inamide-GDP = adenosylcob(III)alamin + GMP + H(+). The enzyme catalyses alpha-ribazole 5'-phosphate + adenosylcob(III)inamide-GDP = adenosylcob(III)alamin 5'-phosphate + GMP + H(+). Its pathway is cofactor biosynthesis; adenosylcobalamin biosynthesis; adenosylcobalamin from cob(II)yrinate a,c-diamide: step 7/7. Functionally, joins adenosylcobinamide-GDP and alpha-ribazole to generate adenosylcobalamin (Ado-cobalamin). Also synthesizes adenosylcobalamin 5'-phosphate from adenosylcobinamide-GDP and alpha-ribazole 5'-phosphate. This chain is Adenosylcobinamide-GDP ribazoletransferase, found in Pyrobaculum aerophilum (strain ATCC 51768 / DSM 7523 / JCM 9630 / CIP 104966 / NBRC 100827 / IM2).